Consider the following 92-residue polypeptide: MTRSLKKGPFIANHLLKKVHILNLEAQKKVILTWSRGSTIIPSMIGHTIAIHNGREHIPIFITDQMVGHKLGEFSATRTFRGHAKNDKKSRR.

It belongs to the universal ribosomal protein uS19 family.

It localises to the plastid. The protein localises to the chloroplast. Functionally, protein S19 forms a complex with S13 that binds strongly to the 16S ribosomal RNA. The sequence is that of Small ribosomal subunit protein uS19c from Chara vulgaris (Common stonewort).